Reading from the N-terminus, the 246-residue chain is Small ribosomal subunit protein uS2 (246 aa).

Belongs to the universal ribosomal protein uS2 family.

This chain is Small ribosomal subunit protein uS2, found in Stutzerimonas stutzeri (strain A1501) (Pseudomonas stutzeri).